A 242-amino-acid polypeptide reads, in one-letter code: Small ribosomal subunit protein uS3 (242 aa).

Positions 39 to 110 constitute a KH type-2 domain; it reads IRRFIHKKYG…QVRINVVEVE (72 aa). The segment at 216 to 242 is disordered; the sequence is QSMPVGASPRRRGNRRPQQFEDRSNEG. Positions 233–242 are enriched in basic and acidic residues; the sequence is QQFEDRSNEG.

This sequence belongs to the universal ribosomal protein uS3 family. As to quaternary structure, part of the 30S ribosomal subunit. Forms a tight complex with proteins S10 and S14.

Its function is as follows. Binds the lower part of the 30S subunit head. Binds mRNA in the 70S ribosome, positioning it for translation. The polypeptide is Small ribosomal subunit protein uS3 (Prochlorococcus marinus (strain MIT 9303)).